The chain runs to 481 residues: Cysteine--tRNA ligase (481 aa).

Position 27 (Cys-27) interacts with Zn(2+). The short motif at 29-39 (PTVYNYAHIGN) is the 'HIGH' region element. Positions 222, 247, and 251 each coordinate Zn(2+). Residues 279–283 (KMSKS) carry the 'KMSKS' region motif. Lys-282 serves as a coordination point for ATP.

The protein belongs to the class-I aminoacyl-tRNA synthetase family. Monomer. Requires Zn(2+) as cofactor.

It is found in the cytoplasm. It carries out the reaction tRNA(Cys) + L-cysteine + ATP = L-cysteinyl-tRNA(Cys) + AMP + diphosphate. This is Cysteine--tRNA ligase from Borrelia hermsii (strain HS1 / DAH).